The primary structure comprises 56 residues: Small ribosomal subunit protein uS14 (56 aa).

Residues Cys-21, Cys-24, Cys-39, and Cys-42 each contribute to the Zn(2+) site.

This sequence belongs to the universal ribosomal protein uS14 family. Component of the 40S small ribosomal subunit. Zn(2+) serves as cofactor.

The protein localises to the cytoplasm. Its subcellular location is the cytosol. It localises to the rough endoplasmic reticulum. In Lysiphlebus testaceipes (Greenbugs aphid parastoid), this protein is Small ribosomal subunit protein uS14 (RpS29).